The chain runs to 415 residues: Histidine--tRNA ligase (415 aa).

It belongs to the class-II aminoacyl-tRNA synthetase family. In terms of assembly, homodimer.

The protein localises to the cytoplasm. The enzyme catalyses tRNA(His) + L-histidine + ATP = L-histidyl-tRNA(His) + AMP + diphosphate + H(+). The chain is Histidine--tRNA ligase from Clostridium botulinum (strain Kyoto / Type A2).